The sequence spans 174 residues: 5-hydroxymethyl-dUMP N-hydrolase (174 aa).

Residue Ala-2 is modified to N-acetylalanine. Gly-27 is a binding site for 5-hydroxymethyl-dUMP. Ser-28 carries the phosphoserine modification. The 5-hydroxymethyl-dUMP site is built by Ile-29, Arg-30, Gly-31, Ser-98, Gly-100, and Glu-104. Residue Ser-98 is modified to Phosphoserine. Phosphoserine occurs at positions 123, 128, 138, and 169. Ser-128 serves as a coordination point for 5-hydroxymethyl-dUMP.

It belongs to the 2'-deoxynucleoside 5'-phosphate N-hydrolase 1 family. As to quaternary structure, monomer and homodimer. As to expression, expressed at low levels in brain, colon, lung, peripheral blood leukocytes, placenta, small intestine, and thymus. Expressed at high levels in heart, kidney, liver, skeletal muscle and spleen. Overexpressed in a significant proportion of breast cancers.

It localises to the cytoplasm. Its subcellular location is the nucleus. The enzyme catalyses 5-hydroxymethyl-dUMP + H2O = 5-hydroxymethyluracil + 2-deoxy-D-ribose 5-phosphate. Inhibited by AMP and GMP. In terms of biological role, part of a nucleotide salvage pathway that eliminates epigenetically modified 5-hydroxymethyl-dCMP (hmdCMP) in a two-step process entailing deamination to cytotoxic 5-hydroxymethyl-dUMP (hmdUMP), followed by its hydrolysis into 5-hydroxymethyluracil (hmU) and 2-deoxy-D-ribose 5-phosphate (deoxyribosephosphate). Catalyzes the second step in that pathway, the hydrolysis of the N-glycosidic bond in hmdUMP, degrading this cytotoxic nucleotide to avoid its genomic integration. The sequence is that of 5-hydroxymethyl-dUMP N-hydrolase from Homo sapiens (Human).